A 699-amino-acid chain; its full sequence is Receptor-type tyrosine-protein phosphatase epsilon (699 aa).

Residues 1–19 (MEPFCPLLLASFSLSLARA) form the signal peptide. Residues 20 to 36 (GQGNDTTPTESNWTSTT) are compositionally biased toward low complexity. A disordered region spans residues 20 to 40 (GQGNDTTPTESNWTSTTAGPP). Topologically, residues 20 to 45 (GQGNDTTPTESNWTSTTAGPPDPGAS) are extracellular. N-linked (GlcNAc...) asparagine glycans are attached at residues asparagine 23 and asparagine 31. A helical membrane pass occupies residues 46–68 (QPLLTWLLLPLLLLLFLLAAYFF). Residues 69-699 (RFRKQRKAVV…DIFSDYANFK (631 aa)) lie on the Cytoplasmic side of the membrane. Tyrosine-protein phosphatase domains are found at residues 134–393 (FREE…LLEY) and 425–688 (LEEE…VQDF). Residues aspartate 302, 334-340 (CSAGVGR), and glutamine 378 each bind substrate. Residue cysteine 334 is the Phosphocysteine intermediate of the active site. The Phosphocysteine intermediate role is filled by cysteine 629. Phosphotyrosine is present on tyrosine 695.

The protein belongs to the protein-tyrosine phosphatase family. Receptor class 4 subfamily. As to quaternary structure, monomer. Isoform 2: Homodimer. Can form oligomers. Dimerization is increased by oxidative stress and decreased by EGFR. Isoform 2 interacts with GRB2. A catalytically active cytoplasmic form (p65) is produced by proteolytic cleavage of either isoform 1, isoform 2 or isoform 3. In terms of processing, phosphorylated on tyrosine residues by tyrosine kinase Neu. Post-translationally, glycosylated. In terms of tissue distribution, isoform 2 is expressed in the spleen and thymus (at protein level). Detected in fibroblasts, myeloid cells, macrophages, and T-cells but not in B-cell lines. Isoform 1 and isoform 2 are expressed predominantly in the brain, testes, and lungs, with lower levels present in lymph nodes, thymus, spleen, heart and mammary glands. Isoform 1 is expressed in osteoclasts and not in osteoblasts and its expression is related to osteoclast differentiation. It is also expressed in the erythrocytes. Isoform 2 is strongly expressed in skeletal muscle and L6 skeletal muscle cell line.

The protein localises to the cell membrane. It is found in the cytoplasm. The enzyme catalyses O-phospho-L-tyrosyl-[protein] + H2O = L-tyrosyl-[protein] + phosphate. Inhibited by alendronate (ALN), orthovanadate, and phenylarsine oxide (PAO). Acts as a negative regulator of insulin receptor (IR) signaling and is involved in insulin-induced glucose metabolism mainly through direct dephosphorylation and inactivation of IR in hepatocytes and liver. Plays a critical role in signaling transduction pathways and phosphoprotein network topology in red blood cells. May play a role in osteoclast formation and function. Its function is as follows. Acts as a negative regulator of insulin receptor (IR) signaling in skeletal muscle. Regulates insulin-induced tyrosine phosphorylation of insulin receptor (IR) and insulin receptor substrate 1 (IRS-1), phosphorylation of protein kinase B and glycogen synthase kinase-3 and insulin induced stimulation of glucose uptake. Functionally, isoform 1 and isoform 2 act as a negative regulator of FceRI-mediated signal transduction leading to cytokine production and degranulation, most likely by acting at the level of SYK to affect downstream events such as phosphorylation of SLP76 and LAT and mobilization of Ca(2+). The protein is Receptor-type tyrosine-protein phosphatase epsilon (Ptpre) of Mus musculus (Mouse).